We begin with the raw amino-acid sequence, 155 residues long: Regulatory protein RecX (155 aa).

This sequence belongs to the RecX family.

It is found in the cytoplasm. Its function is as follows. Modulates RecA activity. The polypeptide is Regulatory protein RecX (Vibrio parahaemolyticus serotype O3:K6 (strain RIMD 2210633)).